Reading from the N-terminus, the 265-residue chain is Glutamate racemase (265 aa).

Residues Asp-9–Ser-10 and Tyr-41–Ser-42 each bind substrate. The active-site Proton donor/acceptor is Cys-73. Asn-74–Thr-75 is a substrate binding site. Catalysis depends on Cys-184, which acts as the Proton donor/acceptor. Thr-185–His-186 contributes to the substrate binding site.

The protein belongs to the aspartate/glutamate racemases family.

The enzyme catalyses L-glutamate = D-glutamate. The protein operates within cell wall biogenesis; peptidoglycan biosynthesis. Provides the (R)-glutamate required for cell wall biosynthesis. The polypeptide is Glutamate racemase (Actinobacillus pleuropneumoniae serotype 5b (strain L20)).